Consider the following 457-residue polypeptide: ADP-dependent glucose/glucosamine kinase (457 aa).

The region spanning 5–457 is the ADPK domain; that stretch reads TNWESLYEKA…SAFVSEFSLH (453 aa). D-glucose is bound by residues Asp-37, Glu-91, 115–116, and His-179; that span reads GQ. Glu-269 is a Mg(2+) binding site. Residue Asn-295 coordinates ADP. Glu-298 contributes to the Mg(2+) binding site. ADP contacts are provided by residues 345 to 346, Val-432, and Gly-442; that span reads HT. Position 443 (Asp-443) interacts with D-glucose. Residue Asp-443 coordinates Mg(2+). The active-site Proton acceptor is Asp-443.

This sequence belongs to the ADP-dependent glucokinase family. Requires Mg(2+) as cofactor.

The protein resides in the cytoplasm. It carries out the reaction D-glucose + ADP = D-glucose 6-phosphate + AMP + H(+). The enzyme catalyses D-glucosamine + ADP = D-glucosamine 6-phosphate + AMP + H(+). The protein operates within carbohydrate degradation; glycolysis. Inhibited by 8-bromoadenosine phosphate (8-Br-AMP). Catalyzes the ADP-dependent phosphorylation of D-glucose to D-glucose 6-phosphate and glucosamine to glucosamine 6-phosphate. The polypeptide is ADP-dependent glucose/glucosamine kinase (Pyrococcus horikoshii (strain ATCC 700860 / DSM 12428 / JCM 9974 / NBRC 100139 / OT-3)).